We begin with the raw amino-acid sequence, 877 residues long: DNA (cytosine-5)-methyltransferase 3A (877 aa).

Disordered regions lie at residues 1 to 154, 194 to 250, and 412 to 431; these read MVES…MQRH, EETP…PEYE, and AYAPPPPAKKPRKSTTEKPK. Composition is skewed to basic and acidic residues over residues 107 to 133 and 195 to 206; these read KLLEATEKSKEEKEENNFDSLKMEGSR and ETPRAEPQKEEE. The span at 210–225 shows a compositional bias: polar residues; that stretch reads PASQQPTDPASPNVAT. The 59-residue stretch at 226 to 284 folds into the PWWP domain; it reads TPEPVVADAVDKNTSKSADDEPEYEDGRGLGIGELVWGKLRGFSWWPGRIVSWWMTGRS. Positions 234–244 are enriched in basic and acidic residues; sequence AVDKNTSKSAD. An ADD domain is found at 447 to 579; that stretch reads EVRQKCRNIE…LQMFFANNHD (133 aa). Residues 458–488 form a GATA-type; atypical zinc finger; the sequence is ICISCGSLNVTLEHPLFIGGMCQNCKNCFLE. The segment at 499-555 adopts a PHD-type; atypical zinc-finger fold; it reads QSYCTICCGGREVLMCGNNNCCRCFCVECVDLLVGPGAAQAAIKEDPWNCYMCGHKG. The region spanning 599 to 877 is the SAM-dependent MTase C5-type domain; the sequence is IRVLSLFDGI…APLKEYFACV (279 aa). Residues 606 to 610, glutamate 629, and 651 to 653 each bind S-adenosyl-L-methionine; these read DGIAT and DVR. Cysteine 675 is an active-site residue. S-adenosyl-L-methionine is bound at residue 856–858; that stretch reads RSW.

It belongs to the class I-like SAM-binding methyltransferase superfamily. C5-methyltransferase family.

The protein localises to the nucleus. The protein resides in the chromosome. It is found in the cytoplasm. The catalysed reaction is a 2'-deoxycytidine in DNA + S-adenosyl-L-methionine = a 5-methyl-2'-deoxycytidine in DNA + S-adenosyl-L-homocysteine + H(+). The enzyme catalyses L-cysteinyl-[protein] + S-adenosyl-L-methionine = S-methyl-L-cysteinyl-[protein] + S-adenosyl-L-homocysteine + H(+). Its function is as follows. Required for genome-wide de novo methylation and is essential for development. DNA methylation is coordinated with methylation of histones. It modifies DNA in a non-processive manner and also methylates non-CpG sites. Acts as a transcriptional corepressor for ZNF238. Can actively repress transcription through the recruitment of HDAC activity. Also has weak auto-methylation activity on some Cys residue in absence of DNA. This Gallus gallus (Chicken) protein is DNA (cytosine-5)-methyltransferase 3A (DNMT3A).